A 367-amino-acid polypeptide reads, in one-letter code: D-alanine--D-alanine ligase (367 aa).

Residues 139–340 (KLILKEKNIP…FSQVIDNMIS (202 aa)) enclose the ATP-grasp domain. 169-224 (KEVLEYPMIVKPARLGSSIGVKKVNDKCELEEAIETAFSFDDKVIVEKWIDSRELN) lines the ATP pocket. Mg(2+) contacts are provided by Asp-298, Glu-311, and Asn-313.

The protein belongs to the D-alanine--D-alanine ligase family. Requires Mg(2+) as cofactor. Mn(2+) serves as cofactor.

It localises to the cytoplasm. The enzyme catalyses 2 D-alanine + ATP = D-alanyl-D-alanine + ADP + phosphate + H(+). The protein operates within cell wall biogenesis; peptidoglycan biosynthesis. Cell wall formation. The polypeptide is D-alanine--D-alanine ligase (Thermosipho africanus (strain TCF52B)).